Reading from the N-terminus, the 277-residue chain is Phosphate import ATP-binding protein PstB 2 (277 aa).

The 242-residue stretch at 31–272 (IEVPGLSLFY…PAKKQTEDYI (242 aa)) folds into the ABC transporter domain. ATP is bound at residue 63–70 (GPSGCGKS).

This sequence belongs to the ABC transporter superfamily. Phosphate importer (TC 3.A.1.7) family. In terms of assembly, the complex is composed of two ATP-binding proteins (PstB), two transmembrane proteins (PstC and PstA) and a solute-binding protein (PstS).

The protein resides in the cell inner membrane. The enzyme catalyses phosphate(out) + ATP + H2O = ADP + 2 phosphate(in) + H(+). In terms of biological role, part of the ABC transporter complex PstSACB involved in phosphate import. Responsible for energy coupling to the transport system. This Pseudomonas putida (strain ATCC 47054 / DSM 6125 / CFBP 8728 / NCIMB 11950 / KT2440) protein is Phosphate import ATP-binding protein PstB 2.